A 339-amino-acid chain; its full sequence is Tetraacyldisaccharide 4'-kinase (339 aa).

62–69 (VAGGTGKT) contributes to the ATP binding site.

This sequence belongs to the LpxK family.

The enzyme catalyses a lipid A disaccharide + ATP = a lipid IVA + ADP + H(+). Its pathway is glycolipid biosynthesis; lipid IV(A) biosynthesis; lipid IV(A) from (3R)-3-hydroxytetradecanoyl-[acyl-carrier-protein] and UDP-N-acetyl-alpha-D-glucosamine: step 6/6. Transfers the gamma-phosphate of ATP to the 4'-position of a tetraacyldisaccharide 1-phosphate intermediate (termed DS-1-P) to form tetraacyldisaccharide 1,4'-bis-phosphate (lipid IVA). This is Tetraacyldisaccharide 4'-kinase from Xylella fastidiosa (strain 9a5c).